The following is a 493-amino-acid chain: Cardiolipin synthase 1 (493 aa).

2 consecutive transmembrane segments (helical) span residues 13–33 (FTII…IIIF) and 45–65 (WAWL…YLFF). PLD phosphodiesterase domains are found at residues 228–255 (MNNR…GDEY) and 406–433 (ENGF…DFRS). Active-site residues include His-233, Lys-235, Asp-240, His-411, Lys-413, and Asp-418.

This sequence belongs to the phospholipase D family. Cardiolipin synthase subfamily.

It localises to the cell membrane. It carries out the reaction 2 a 1,2-diacyl-sn-glycero-3-phospho-(1'-sn-glycerol) = a cardiolipin + glycerol. Catalyzes the reversible phosphatidyl group transfer from one phosphatidylglycerol molecule to another to form cardiolipin (CL) (diphosphatidylglycerol) and glycerol. The sequence is that of Cardiolipin synthase 1 (cls1) from Staphylococcus aureus (strain MRSA252).